A 366-amino-acid polypeptide reads, in one-letter code: N-acetyl-6-hydroxytryptophan oxidase ivoB (366 aa).

The first 18 residues, 1–18 (MHLLSSLAALAAAITVAF), serve as a signal peptide directing secretion. Asn-28 and Asn-81 each carry an N-linked (GlcNAc...) asparagine glycan. Cu cation contacts are provided by His-87 and His-96. Asn-114 and Asn-121 each carry an N-linked (GlcNAc...) asparagine glycan. His-291 serves as a coordination point for Cu cation. Residue Asn-319 is glycosylated (N-linked (GlcNAc...) asparagine).

The protein belongs to the tyrosinase family. Requires Cu(2+) as cofactor.

It functions in the pathway pigment biosynthesis. Its activity is regulated as follows. Activity is inhibited by 2,3-dihydroxynaphthalene, phenylhydrazine, diethyl dithiocarbamate and 8-hydroxyquinolene. Its function is as follows. Nonribosomal peptide synthetase; part of the pathway that mediates the biosynthesis of the gray-brown conidiophore pigment. The first step of the pathway is performed by the nonribosomal peptide synthetase ivoA that catalyzes ATP-dependent unidirectional stereoinversion of L-tryptophan to D-tryptophan with complete conversion. While the stereoinversion is catalyzed by the epimerization (E) domain of ivoA, the terminal condensation (C) domain stereoselectively hydrolyzes D-tryptophanyl-S-phosphopantetheine thioester and thus represents a non-canonical C domain function. D-tryptophan is acetylated, probably by an endogenous acetyltransferase. N-acetyltryptophan is further 6-hydroxylated into N-acetyl-6-hydroxytryptophan (AHT) by the cytochrome P450 monooxygenase ivoC. N-acetyl-6-hydroxytryptophan is substrate of the N-acetyl-6-hydroxytryptophan oxidase ivoB to produce the gray-brown conidiophore pigment. This Emericella nidulans (strain FGSC A4 / ATCC 38163 / CBS 112.46 / NRRL 194 / M139) (Aspergillus nidulans) protein is N-acetyl-6-hydroxytryptophan oxidase ivoB.